The chain runs to 436 residues: 3-ketoacyl-CoA thiolase (436 aa).

Catalysis depends on Cys99, which acts as the Acyl-thioester intermediate. Catalysis depends on proton acceptor residues His392 and Cys422.

It belongs to the thiolase-like superfamily. Thiolase family. As to quaternary structure, heterotetramer of two alpha chains (FadJ) and two beta chains (FadI).

The protein resides in the cytoplasm. It carries out the reaction an acyl-CoA + acetyl-CoA = a 3-oxoacyl-CoA + CoA. It functions in the pathway lipid metabolism; fatty acid beta-oxidation. Functionally, catalyzes the final step of fatty acid oxidation in which acetyl-CoA is released and the CoA ester of a fatty acid two carbons shorter is formed. The protein is 3-ketoacyl-CoA thiolase of Shewanella denitrificans (strain OS217 / ATCC BAA-1090 / DSM 15013).